The primary structure comprises 304 residues: Kazal-type serine protease inhibitor domain-containing protein 1 (304 aa).

The N-terminal stretch at 1-30 is a signal peptide; the sequence is MLPPPRPAAALALPVLLLLLVVLTPPPTGA. The IGFBP N-terminal domain occupies 49 to 129; that stretch reads EGEGCAPCRP…EVPEPLCACR (81 aa). Disulfide bonds link cysteine 53-cysteine 76, cysteine 56-cysteine 78, cysteine 61-cysteine 79, cysteine 67-cysteine 82, cysteine 90-cysteine 108, cysteine 102-cysteine 126, and cysteine 135-cysteine 168. The 51-residue stretch at 120-170 folds into the Kazal-like domain; it reads EVPEPLCACRSQSPLCGSDGHTYSQICRLQEAARARPDANLTVAHPGPCES. Residues asparagine 159 and asparagine 183 are each glycosylated (N-linked (GlcNAc...) asparagine). Residues 172-269 enclose the Ig-like C2-type domain; it reads PQIVSHPYDT…GQVEAPASLT (98 aa). Cysteines 193 and 253 form a disulfide. N-linked (GlcNAc...) asparagine glycosylation is present at asparagine 277.

It is found in the secreted. The protein resides in the extracellular space. It localises to the extracellular matrix. In terms of biological role, involved in the proliferation of osteoblasts during bone formation and bone regeneration. Promotes matrix assembly. This chain is Kazal-type serine protease inhibitor domain-containing protein 1 (KAZALD1), found in Homo sapiens (Human).